A 368-amino-acid chain; its full sequence is S-adenosylmethionine:tRNA ribosyltransferase-isomerase (368 aa).

This sequence belongs to the QueA family. As to quaternary structure, monomer.

The protein localises to the cytoplasm. The catalysed reaction is 7-aminomethyl-7-carbaguanosine(34) in tRNA + S-adenosyl-L-methionine = epoxyqueuosine(34) in tRNA + adenine + L-methionine + 2 H(+). It participates in tRNA modification; tRNA-queuosine biosynthesis. Its function is as follows. Transfers and isomerizes the ribose moiety from AdoMet to the 7-aminomethyl group of 7-deazaguanine (preQ1-tRNA) to give epoxyqueuosine (oQ-tRNA). The polypeptide is S-adenosylmethionine:tRNA ribosyltransferase-isomerase (Methylorubrum extorquens (strain CM4 / NCIMB 13688) (Methylobacterium extorquens)).